Consider the following 80-residue polypeptide: MSCCGGNCGCGAGCKCVGCGGCKMYPDLSFSGETTTSEALVLGVAPSMNSQYEASGETFVAENDACKCGSDCKCNPCTCK.

Belongs to the metallothionein superfamily. Type 15 family.

Metallothioneins have a high content of cysteine residues that bind various heavy metals. The polypeptide is Metallothionein-like protein type 2, MT2-22 (Brassica juncea (Indian mustard)).